A 179-amino-acid chain; its full sequence is Large ribosomal subunit protein uL5 (179 aa).

This sequence belongs to the universal ribosomal protein uL5 family. In terms of assembly, part of the 50S ribosomal subunit; part of the 5S rRNA/L5/L18/L25 subcomplex. Contacts the 5S rRNA and the P site tRNA. Forms a bridge to the 30S subunit in the 70S ribosome.

Functionally, this is one of the proteins that bind and probably mediate the attachment of the 5S RNA into the large ribosomal subunit, where it forms part of the central protuberance. In the 70S ribosome it contacts protein S13 of the 30S subunit (bridge B1b), connecting the 2 subunits; this bridge is implicated in subunit movement. Contacts the P site tRNA; the 5S rRNA and some of its associated proteins might help stabilize positioning of ribosome-bound tRNAs. The polypeptide is Large ribosomal subunit protein uL5 (Cellvibrio japonicus (strain Ueda107) (Pseudomonas fluorescens subsp. cellulosa)).